The sequence spans 130 residues: Small ribosomal subunit protein uS9 (130 aa).

Belongs to the universal ribosomal protein uS9 family.

The protein is Small ribosomal subunit protein uS9 of Salmonella paratyphi C (strain RKS4594).